The primary structure comprises 261 residues: Kallikrein-1 (261 aa).

The N-terminal stretch at 1–18 (MRFLILFLALSLGGIDAA) is a signal peptide. Positions 19–24 (PPVQSR) are cleaved as a propeptide — activation peptide. The Peptidase S1 domain occupies 25 to 258 (IVGGFNCEKN…FNTWIRETMA (234 aa)). 5 disulfide bridges follow: C31–C173, C50–C66, C152–C219, C184–C198, and C209–C234. The active-site Charge relay system is the H65. N102 is a glycosylation site (N-linked (GlcNAc...) asparagine). D120 (charge relay system) is an active-site residue. S213 serves as the catalytic Charge relay system.

This sequence belongs to the peptidase S1 family. Kallikrein subfamily.

The catalysed reaction is Preferential cleavage of Arg-|-Xaa bonds in small molecule substrates. Highly selective action to release kallidin (lysyl-bradykinin) from kininogen involves hydrolysis of Met-|-Xaa or Leu-|-Xaa.. Glandular kallikreins cleave Met-Lys and Arg-Ser bonds in kininogen to release Lys-bradykinin. The protein is Kallikrein-1 (Klk1) of Mus musculus (Mouse).